We begin with the raw amino-acid sequence, 127 residues long: Large ribosomal subunit protein bL12 (127 aa).

It belongs to the bacterial ribosomal protein bL12 family. As to quaternary structure, homodimer. Part of the ribosomal stalk of the 50S ribosomal subunit. Forms a multimeric L10(L12)X complex, where L10 forms an elongated spine to which 2 to 4 L12 dimers bind in a sequential fashion. Binds GTP-bound translation factors.

Functionally, forms part of the ribosomal stalk which helps the ribosome interact with GTP-bound translation factors. Is thus essential for accurate translation. The polypeptide is Large ribosomal subunit protein bL12 (Pelobacter propionicus (strain DSM 2379 / NBRC 103807 / OttBd1)).